Reading from the N-terminus, the 108-residue chain is Pyrimidine/purine nucleoside phosphorylase (108 aa).

It belongs to the nucleoside phosphorylase PpnP family.

It carries out the reaction a purine D-ribonucleoside + phosphate = a purine nucleobase + alpha-D-ribose 1-phosphate. The catalysed reaction is adenosine + phosphate = alpha-D-ribose 1-phosphate + adenine. It catalyses the reaction cytidine + phosphate = cytosine + alpha-D-ribose 1-phosphate. The enzyme catalyses guanosine + phosphate = alpha-D-ribose 1-phosphate + guanine. It carries out the reaction inosine + phosphate = alpha-D-ribose 1-phosphate + hypoxanthine. The catalysed reaction is thymidine + phosphate = 2-deoxy-alpha-D-ribose 1-phosphate + thymine. It catalyses the reaction uridine + phosphate = alpha-D-ribose 1-phosphate + uracil. The enzyme catalyses xanthosine + phosphate = alpha-D-ribose 1-phosphate + xanthine. Its function is as follows. Catalyzes the phosphorolysis of diverse nucleosides, yielding D-ribose 1-phosphate and the respective free bases. Can use uridine, adenosine, guanosine, cytidine, thymidine, inosine and xanthosine as substrates. Also catalyzes the reverse reactions. The sequence is that of Pyrimidine/purine nucleoside phosphorylase from Acinetobacter baumannii (strain AB307-0294).